The primary structure comprises 183 residues: Archaemetzincin (183 aa).

His131 is a binding site for Zn(2+). Catalysis depends on Glu132, which acts as the Proton acceptor. Zn(2+) contacts are provided by His135, His141, Cys142, Cys147, and Cys166.

Belongs to the peptidase M54 family. In terms of assembly, monomer. Requires Zn(2+) as cofactor.

Functionally, probable zinc metalloprotease whose natural substrate is unknown. The polypeptide is Archaemetzincin (Saccharolobus solfataricus (strain ATCC 35092 / DSM 1617 / JCM 11322 / P2) (Sulfolobus solfataricus)).